The sequence spans 33 residues: Brevinin-2E (33 aa).

A disulfide bridge connects residues Cys27 and Cys33.

This sequence belongs to the frog skin active peptide (FSAP) family. Brevinin subfamily. In terms of tissue distribution, expressed by the skin glands.

It localises to the secreted. Its function is as follows. Shows antibacterial activity against representative Gram-negative and Gram-positive bacterial species, and hemolytic activity. This chain is Brevinin-2E, found in Pelophylax lessonae (Pool frog).